A 500-amino-acid polypeptide reads, in one-letter code: Cysteine--tRNA ligase (500 aa).

Cysteine 29 is a Zn(2+) binding site. Residues 31–41 carry the 'HIGH' region motif; sequence VTVYDLCHLGH. Zn(2+) contacts are provided by cysteine 213, histidine 238, and glutamate 242. The 'KMSKS' region motif lies at 270–274; sequence KMSKS. Lysine 273 is an ATP binding site.

The protein belongs to the class-I aminoacyl-tRNA synthetase family. Monomer. Zn(2+) is required as a cofactor.

It is found in the cytoplasm. The enzyme catalyses tRNA(Cys) + L-cysteine + ATP = L-cysteinyl-tRNA(Cys) + AMP + diphosphate. The protein is Cysteine--tRNA ligase of Prochlorococcus marinus (strain NATL1A).